Consider the following 90-residue polypeptide: UPF0213 protein lin0209 (90 aa).

Residues 5 to 80 form the GIY-YIG domain; sequence NEHFFYVLKC…KKLSRKNKDS (76 aa).

Belongs to the UPF0213 family.

The chain is UPF0213 protein lin0209 from Listeria innocua serovar 6a (strain ATCC BAA-680 / CLIP 11262).